We begin with the raw amino-acid sequence, 1312 residues long: Tetratricopeptide repeat protein 21B (1312 aa).

TPR repeat units lie at residues threonine 4 to aspartate 38, proline 110 to serine 143, leucine 147 to isoleucine 180, alanine 182 to phenylalanine 213, leucine 214 to asparagine 247, and alanine 325 to histidine 358. A coiled-coil region spans residues valine 365 to isoleucine 392. 16 TPR repeats span residues threonine 493–cysteine 526, aspartate 528–valine 560, proline 564–lysine 597, valine 615–threonine 648, proline 720–aspartate 753, serine 755–aspartate 787, leucine 789–serine 820, alanine 829–isoleucine 861, serine 881–serine 914, valine 916–lysine 947, glutamate 948–asparagine 981, alanine 983–threonine 1015, proline 1019–glycine 1052, glutamate 1193–cysteine 1226, lysine 1228–serine 1260, and proline 1262–tyrosine 1295.

Belongs to the TTC21 family. Component of the IFT complex A (IFT-A).

Its function is as follows. Component of the IFT complex A (IFT-A), a complex required for retrograde ciliary transport and entry into cilia of G protein-coupled receptors (GPCRs). Negatively modulates the SHH signal transduction. The sequence is that of Tetratricopeptide repeat protein 21B (ttc21b) from Xenopus laevis (African clawed frog).